A 223-amino-acid chain; its full sequence is Ribonuclease DdI (223 aa).

Positions 1–25 (MRLIAALLSVLLIASTAQSTVTIYE) are cleaved as a signal peptide. Cysteines 46 and 51 form a disulfide. Residues H63, E113, and H117 contribute to the active site. Residues C78 and C120 are joined by a disulfide bond. N144 carries N-linked (GlcNAc...) asparagine glycosylation. Cystine bridges form between C183/C213 and C194/C205.

It belongs to the RNase T2 family.

The protein localises to the lysosome. It carries out the reaction a ribonucleotidyl-ribonucleotide-RNA + H2O = a 3'-end 3'-phospho-ribonucleotide-RNA + a 5'-end dephospho-ribonucleoside-RNA + H(+). With respect to regulation, inhibited by Cu(2+) and Zn(2+). In terms of biological role, releases mononucleotides from RNA in the order of 3'-GMP &gt; 3'-UMP &gt; 3'-AMP &gt; 3'-CMP. The polypeptide is Ribonuclease DdI (ddiA) (Dictyostelium discoideum (Social amoeba)).